The following is a 387-amino-acid chain: BTB and MATH domain-containing protein 38 (387 aa).

The MATH domain occupies 79-204 (EGMLKLEIPN…NEMVTVTARV (126 aa)). The BTB domain occupies 228–295 (CDMTLVINKQ…IYPCHKPITS (68 aa)).

This Caenorhabditis elegans protein is BTB and MATH domain-containing protein 38 (bath-38).